The chain runs to 146 residues: Hemoglobin subunit beta (146 aa).

The residue at position 1 (Val-1) is an N-acetylvaline. One can recognise a Globin domain in the interval 2–146 (HLTAEEKSLV…VANALAHKYH (145 aa)). Thr-12 is subject to Phosphothreonine. Position 44 is a phosphoserine (Ser-44). Lys-59 carries the post-translational modification N6-acetyllysine. His-63 serves as a coordination point for heme b. Position 82 is an N6-acetyllysine (Lys-82). His-92 is a binding site for heme b. At Cys-93 the chain carries S-nitrosocysteine. Lys-144 carries the N6-acetyllysine modification.

Belongs to the globin family. In terms of assembly, heterotetramer of two alpha chains and two beta chains. In terms of tissue distribution, red blood cells.

Involved in oxygen transport from the lung to the various peripheral tissues. This Vulpes vulpes (Red fox) protein is Hemoglobin subunit beta (HBB).